Reading from the N-terminus, the 155-residue chain is Troponin C, body wall muscle (155 aa).

Residue Val-1 is modified to N-acetylvaline. EF-hand domains lie at 7 to 43, 44 to 79, 88 to 121, and 122 to 155; these read DEKS…LGQN, PTEK…QMQA, REEK…TGEN, and VETW…KFVQ. Ca(2+) is bound by residues Asp-57, Asp-59, Ser-61, Thr-63, and Glu-68. Ca(2+)-binding residues include Asp-135, Asn-137, Asp-139, Gln-141, and Glu-146.

Belongs to the troponin C family.

Functionally, troponin is the central regulatory protein of muscle contraction. Tn consists of three components: Tn-I which is the inhibitor of actomyosin ATPase, Tn-T which contains the binding site for tropomyosin and Tn-C. The binding of calcium to Tn-C abolishes the inhibitory action of Tn on actin filaments. The polypeptide is Troponin C, body wall muscle (Halocynthia roretzi (Sea squirt)).